We begin with the raw amino-acid sequence, 182 residues long: COP9 signalosome complex subunit 8 (182 aa).

A PCI domain is found at 1–167; the sequence is MHLNKYSEVV…QEAPPARGND (167 aa).

The protein belongs to the CSN8 family. In terms of assembly, essential component of the CSN complex, probably composed of CSN1b, alien/CSN2, CSN3, CSN4, CSN5, CSN6, CSN7 and CSN8.

Its subcellular location is the cytoplasm. The protein localises to the nucleus. Probable component of the COP9 signalosome complex (CSN), a complex involved in various cellular and developmental processes. The CSN complex is an essential regulator of the ubiquitin (Ubl) conjugation pathway by mediating the deneddylation of the cullin subunits of the SCF-type E3 ligase complexes, leading to decrease the Ubl ligase activity of SCF. The CSN complex plays an essential role in oogenesis and embryogenesis and is required for proper photoreceptor R cell differentiation and promote lamina glial cell migration or axon targeting. It also promotes Ubl-dependent degradation of cyclin E (CycE) during early oogenesis. This Drosophila melanogaster (Fruit fly) protein is COP9 signalosome complex subunit 8 (CSN8).